The sequence spans 483 residues: Glutamyl-tRNA(Gln) amidotransferase subunit A (483 aa).

Residues lysine 77 and serine 152 each act as charge relay system in the active site. Serine 176 serves as the catalytic Acyl-ester intermediate.

It belongs to the amidase family. GatA subfamily. Heterotrimer of A, B and C subunits.

The enzyme catalyses L-glutamyl-tRNA(Gln) + L-glutamine + ATP + H2O = L-glutaminyl-tRNA(Gln) + L-glutamate + ADP + phosphate + H(+). Its function is as follows. Allows the formation of correctly charged Gln-tRNA(Gln) through the transamidation of misacylated Glu-tRNA(Gln) in organisms which lack glutaminyl-tRNA synthetase. The reaction takes place in the presence of glutamine and ATP through an activated gamma-phospho-Glu-tRNA(Gln). The sequence is that of Glutamyl-tRNA(Gln) amidotransferase subunit A from Listeria innocua serovar 6a (strain ATCC BAA-680 / CLIP 11262).